Reading from the N-terminus, the 495-residue chain is Lysine--tRNA ligase (495 aa).

Positions 406 and 413 each coordinate Mg(2+).

The protein belongs to the class-II aminoacyl-tRNA synthetase family. As to quaternary structure, homodimer. The cofactor is Mg(2+).

It localises to the cytoplasm. The enzyme catalyses tRNA(Lys) + L-lysine + ATP = L-lysyl-tRNA(Lys) + AMP + diphosphate. In Staphylococcus epidermidis (strain ATCC 35984 / DSM 28319 / BCRC 17069 / CCUG 31568 / BM 3577 / RP62A), this protein is Lysine--tRNA ligase.